A 1517-amino-acid polypeptide reads, in one-letter code: DNA-directed RNA polymerase subunit beta' (1517 aa).

Residues Cys-71, Cys-73, Cys-86, and Cys-89 each coordinate Zn(2+). Mg(2+) contacts are provided by Asp-482, Asp-484, and Asp-486. Zn(2+) contacts are provided by Cys-812, Cys-886, Cys-893, and Cys-896.

It belongs to the RNA polymerase beta' chain family. As to quaternary structure, the RNAP catalytic core consists of 2 alpha, 1 beta, 1 beta' and 1 omega subunit. When a sigma factor is associated with the core the holoenzyme is formed, which can initiate transcription. Mg(2+) is required as a cofactor. Requires Zn(2+) as cofactor.

It catalyses the reaction RNA(n) + a ribonucleoside 5'-triphosphate = RNA(n+1) + diphosphate. Its function is as follows. DNA-dependent RNA polymerase catalyzes the transcription of DNA into RNA using the four ribonucleoside triphosphates as substrates. The polypeptide is DNA-directed RNA polymerase subunit beta' (Campylobacter jejuni subsp. jejuni serotype O:6 (strain 81116 / NCTC 11828)).